The chain runs to 417 residues: Phosphoglycerate kinase 1 (417 aa).

Ser2 bears the N-acetylserine mark. 2 positions are modified to phosphoserine: Ser2 and Ser4. Residues 2 to 186 (SLSNKLTLDK…VGVNLPQKAG (185 aa)) are globular domain-1. At Lys6 the chain carries N6-succinyllysine. Lys11 is subject to N6-acetyllysine. 6 residues coordinate (2R)-3-phosphoglycerate: Val23, Asp24, Phe25, Asn26, Gln38, and Arg39. The segment at 38-43 (QRIKAA) is mitochondrial targeting region exposed following cis-trans isomerization by PIN1 and recognized by the TOM complex for mitochondrial translocation of the protein. Lys48 is modified (N6-acetyllysine; alternate). Lys48 carries the N6-succinyllysine; alternate modification. (2R)-3-phosphoglycerate contacts are provided by Ser62, His63, Gly65, and Arg66. Lys75 is subject to N6-acetyllysine. Tyr76 is subject to Phosphotyrosine. An N6-acetyllysine mark is found at Lys86 and Lys91. N6-acetyllysine; alternate is present on Lys97. The residue at position 97 (Lys97) is an N6-(2-hydroxyisobutyryl)lysine; alternate. The (2R)-3-phosphoglycerate site is built by Leu122 and Arg123. An N6-acetyllysine; alternate modification is found at Lys131. Lys131 carries the N6-malonyllysine; alternate modification. N6-acetyllysine is present on Lys146. Residues His170 and Arg171 each coordinate (2R)-3-phosphoglycerate. Residues 187 to 190 (GFLM) are linker. Residue Lys191 is modified to N6-succinyllysine. Positions 191–417 (KKELNYFAKA…LPGVDALSNV (227 aa)) are globular domain-2. Tyr196 bears the Phosphotyrosine mark. Lys199 is modified (N6-acetyllysine). Ser203 is modified (phosphoserine). Gly214 lines the ADP pocket. Gly214 contacts CDP. AMP-binding residues include Ala215 and Lys216. Residue Ala215 coordinates ATP. Ala215 provides a ligand contact to Mg(2+). Residue Lys216 is modified to N6-(2-hydroxyisobutyryl)lysine. The Mg(2+) site is built by Ala218 and Asp219. Asp219 is a CDP binding site. Lys220 contacts AMP. Residue Lys220 participates in ATP binding. Position 220 is an N6-(2-hydroxyisobutyryl)lysine (Lys220). Gly238 serves as a coordination point for ADP. Residue Gly238 participates in CDP binding. Gly239 is a binding site for AMP. Residue Gly239 participates in ATP binding. Lys267 and Lys291 each carry N6-acetyllysine. Gly313 is a binding site for AMP. Gly313 is an ATP binding site. Lys323 is subject to N6-(2-hydroxyisobutyryl)lysine. Positions 338, 340, and 343 each coordinate CDP. Phe343 is an ADP binding site. Glu344 provides a ligand contact to AMP. Glu344 is an ATP binding site. Lys361 is subject to N6-acetyllysine. The ATP site is built by Asp375 and Thr376. Position 375 (Asp375) interacts with Mg(2+). An associated with globular domain 1 region spans residues 406-417 (KVLPGVDALSNV).

Belongs to the phosphoglycerate kinase family. As to quaternary structure, monomer. Interacts with kinase MAPK1/ERK2; the interaction is direct, occurs under hypoxic conditions, and promotes its interaction with PIN1. Interacts with peptidyl-prolyl cis-trans isomerase PIN1; the interaction is direct, occurs under hypoxic conditions, and targets the protein to the mitochondrion by promoting interactions with the TOM complex. Interacts with mitochondrial circRNA mcPGK1 (via its 2nd stem-loop); the interaction is direct and targets the protein to the mitochondrion by promoting interactions with the TOM complex. Interacts with pyruvate dehydrogenase kinase PDK1; the interaction is direct, occurs under hypoxic conditions and leads to PDK1-mediated inhibition of pyruvate dehydrogenase complex activity. Requires Mg(2+) as cofactor. Post-translationally, phosphorylated at Ser-203 by MAPK1/ERK2 under hypoxic conditions, which promotes its mitochondrial targeting.

Its subcellular location is the cytoplasm. It localises to the cytosol. It is found in the mitochondrion matrix. The catalysed reaction is (2R)-3-phosphoglycerate + ATP = (2R)-3-phospho-glyceroyl phosphate + ADP. It carries out the reaction L-seryl-[protein] + ATP = O-phospho-L-seryl-[protein] + ADP + H(+). It functions in the pathway carbohydrate degradation; glycolysis; pyruvate from D-glyceraldehyde 3-phosphate: step 2/5. In terms of biological role, catalyzes one of the two ATP producing reactions in the glycolytic pathway via the reversible conversion of 1,3-diphosphoglycerate to 3-phosphoglycerate. Both L- and D- forms of purine and pyrimidine nucleotides can be used as substrates, but the activity is much lower on pyrimidines. In addition to its role as a glycolytic enzyme, it seems that PGK-1 acts as a polymerase alpha cofactor protein (primer recognition protein). Acts as a protein kinase when localized to the mitochondrion where it phosphorylates pyruvate dehydrogenase kinase PDK1 to inhibit pyruvate dehydrogenase complex activity and suppress the formation of acetyl-coenzyme A from pyruvate, and consequently inhibit oxidative phosphorylation and promote glycolysis. May play a role in sperm motility. The sequence is that of Phosphoglycerate kinase 1 (PGK1) from Equus caballus (Horse).